The chain runs to 419 residues: G protein-activated inward rectifier potassium channel 4 (419 aa).

Residues 1 to 86 (MAGDSRNAMN…LFTTLVDLKW (86 aa)) are Cytoplasmic-facing. Ser5 carries the post-translational modification Phosphoserine. Residues 87-111 (RFNLLVFTMVYTVTWLFFGFIWWLI) form a helical membrane-spanning segment. Topologically, residues 112–135 (AYIRGDLDHVGDQEWIPCVENLSG) are extracellular. The helical; Pore-forming intramembrane region spans 136-147 (FVSAFLFSIETE). An intramembrane region (pore-forming) is located at residues 148-154 (TTIGYGF). The Selectivity filter motif lies at 149 to 154 (TIGYGF). Topologically, residues 155-163 (RVITEKCPE) are extracellular. A helical membrane pass occupies residues 164-185 (GIILLLVQAILGSIVNAFMVGC). Over 186–419 (MFVKISQPKK…GGSREARGSV (234 aa)) the chain is Cytoplasmic. The interval 390-419 (AEAGLDAEAEQNEEDEPKGLGGSREARGSV) is disordered. Acidic residues predominate over residues 394–405 (LDAEAEQNEEDE).

This sequence belongs to the inward rectifier-type potassium channel (TC 1.A.2.1) family. KCNJ5 subfamily. Associates with KCNJ3/GIRK1 to form a G-protein-activated heteromultimer pore-forming unit. The resulting inward current is much larger. Associates with KCNJ6/GIRK2 to form a G-protein-activated heteromultimer pore-forming unit. As to expression, islets, exocrine pancreas and heart. Expressed in the adrenal cortex, particularly the zona glomerulosa.

The protein resides in the membrane. It carries out the reaction K(+)(in) = K(+)(out). Heteromultimer composed of KCNJ3/GIRK1 and KCNJ5/GIRK4 is activated by phosphatidylinositol 4,5 biphosphate (PtdIns(4,5)P2). Inward rectifier potassium channels are characterized by a greater tendency to allow potassium to flow into the cell rather than out of it. Their voltage dependence is regulated by the concentration of extracellular potassium; as external potassium is raised, the voltage range of the channel opening shifts to more positive voltages. The inward rectification is mainly due to the blockage of outward current by internal magnesium. Can be blocked by external barium. This potassium channel is controlled by G proteins. This chain is G protein-activated inward rectifier potassium channel 4 (KCNJ5), found in Homo sapiens (Human).